The chain runs to 192 residues: Adenylate kinase (192 aa).

ATP is bound at residue 12 to 17 (GSGKTT). The tract at residues 34 to 63 (STGDLLRAEVASGSELGQTIKSYIDNGNLV) is NMP. AMP-binding positions include threonine 35, arginine 40, 61 to 63 (NLV), 88 to 91 (GFPR), and glutamine 95. The segment at 130–136 (GRARGAD) is LID. Arginine 131 is a binding site for ATP. 2 residues coordinate AMP: arginine 133 and arginine 145. Arginine 173 contacts ATP.

This sequence belongs to the adenylate kinase family. As to quaternary structure, monomer.

It is found in the cytoplasm. The enzyme catalyses AMP + ATP = 2 ADP. Its pathway is purine metabolism; AMP biosynthesis via salvage pathway; AMP from ADP: step 1/1. Its function is as follows. Catalyzes the reversible transfer of the terminal phosphate group between ATP and AMP. Plays an important role in cellular energy homeostasis and in adenine nucleotide metabolism. The chain is Adenylate kinase from Nautilia profundicola (strain ATCC BAA-1463 / DSM 18972 / AmH).